The chain runs to 146 residues: D-aminoacyl-tRNA deacylase (146 aa).

The Gly-cisPro motif, important for rejection of L-amino acids signature appears at 138–139 (GP).

Belongs to the DTD family. In terms of assembly, homodimer.

Its subcellular location is the cytoplasm. It catalyses the reaction glycyl-tRNA(Ala) + H2O = tRNA(Ala) + glycine + H(+). The enzyme catalyses a D-aminoacyl-tRNA + H2O = a tRNA + a D-alpha-amino acid + H(+). In terms of biological role, an aminoacyl-tRNA editing enzyme that deacylates mischarged D-aminoacyl-tRNAs. Also deacylates mischarged glycyl-tRNA(Ala), protecting cells against glycine mischarging by AlaRS. Acts via tRNA-based rather than protein-based catalysis; rejects L-amino acids rather than detecting D-amino acids in the active site. By recycling D-aminoacyl-tRNA to D-amino acids and free tRNA molecules, this enzyme counteracts the toxicity associated with the formation of D-aminoacyl-tRNA entities in vivo and helps enforce protein L-homochirality. The polypeptide is D-aminoacyl-tRNA deacylase (Xanthomonas campestris pv. campestris (strain 8004)).